The following is a 21-amino-acid chain: 5-methyltetrahydropteroyltriglutamate--homocysteine methyltransferase (21 aa).

The protein belongs to the vitamin-B12 independent methionine synthase family. The cofactor is Zn(2+).

The protein localises to the cytoplasm. It carries out the reaction 5-methyltetrahydropteroyltri-L-glutamate + L-homocysteine = tetrahydropteroyltri-L-glutamate + L-methionine. It functions in the pathway amino-acid biosynthesis; L-methionine biosynthesis via de novo pathway; L-methionine from L-homocysteine (MetE route): step 1/1. Functionally, catalyzes the transfer of a methyl group from 5-methyltetrahydrofolate to homocysteine resulting in methionine formation. The chain is 5-methyltetrahydropteroyltriglutamate--homocysteine methyltransferase from Populus euphratica (Euphrates poplar).